The sequence spans 327 residues: E3 ubiquitin-protein ligase ZNRF4 (327 aa).

A signal peptide spans 1–28 (MARFAWTRVAPVALVTFWLVLSLSPTDA). At 29-150 (QVNLSSVDFL…EPCPDPECHP (122 aa)) the chain is on the lumenal side. A glycan (N-linked (GlcNAc...) asparagine) is linked at N31. Residues 151–171 (VVVASWALARALALAASTLFV) form a helical membrane-spanning segment. At 172 to 327 (LRQLWPWVRG…AQSEATSELS (156 aa)) the chain is on the cytoplasmic side. The RING-type; atypical zinc-finger motif lies at 209–252 (CAICLDDYEEGERLKILPCAHAYHCRCIDPWFSRAAQRSCPLCK). Over residues 256-265 (ASTHDGSTDG) the composition is skewed to polar residues. Residues 256–279 (ASTHDGSTDGSVGGEEPPLPGHRP) form a disordered region.

In terms of assembly, interacts with CANX. In terms of tissue distribution, expressed exclusively in spermatids (at protein level).

The protein resides in the endoplasmic reticulum membrane. The enzyme catalyses S-ubiquitinyl-[E2 ubiquitin-conjugating enzyme]-L-cysteine + [acceptor protein]-L-lysine = [E2 ubiquitin-conjugating enzyme]-L-cysteine + N(6)-ubiquitinyl-[acceptor protein]-L-lysine.. It functions in the pathway protein modification; protein ubiquitination. Its function is as follows. E3 ubiquitin-protein ligase that acts as a negative regulator of NOD2 signaling by mediating ubiquitination and degradation of RIPK2. Also catalyzes ubiquitination and proteasomal degradation of CANX within the endoplasmic reticulum. Could have a role in spermatogenesis. This Mus musculus (Mouse) protein is E3 ubiquitin-protein ligase ZNRF4.